Reading from the N-terminus, the 568-residue chain is MAGUK p55 subfamily member 3 (568 aa).

L27 domains are found at residues 6–60 (EDSG…ERQS) and 61–118 (PTPV…FDPV). A PDZ domain is found at 137–218 (IVRLVKNKEP…SITLKIIPAT (82 aa)). One can recognise an SH3 domain in the interval 226–296 (DSKVFMRALF…PSKQFQERRL (71 aa)). At serine 307 the chain carries Phosphoserine. The 184-residue stretch at 385 to 568 (PRLVVLIGSL…QEPAASSELS (184 aa)) folds into the Guanylate kinase-like domain.

It belongs to the MAGUK family. Interacts with HTR2C; this interaction stabilizes the receptor at the plasma membrane and prevents the desensitization of the HTR2C receptor-mediated calcium response. Interacts with HTR2A. Interacts with HTR4. Interacts (via PDZ domain) with CADM1 (via C-terminus)Interacts (via PDZ domain) with CADM1; this interaction connects CADM1 with DLG1. Interacts (via Guanylate kinase-like domain) with PALS1. Interacts with DLG1 (via N-terminus); this interaction connects CADM1 with DLG1 and links CADM1 with the regulatory subunit of phosphoinositide-3-kinase (PI3K) by forming a multiprotein complex and participates in cell spreading. Expressed in brain, skeletal muscle, testis, kidney, and lung.

The protein localises to the apical cell membrane. Its subcellular location is the cell membrane. It localises to the cell junction. The protein resides in the adherens junction. Functionally, participates in cell spreading through the phosphoinositide-3-kinase (PI3K) pathway by connecting CADM1 to DLG1 and the regulatory subunit of phosphoinositide-3-kinase (PI3K). Stabilizes HTR2C at the plasma membrane and prevents its desensitization. May participates in the maintenance of adherens junctions. This Mus musculus (Mouse) protein is MAGUK p55 subfamily member 3.